A 371-amino-acid chain; its full sequence is Ferredoxin--NADP reductase, apicoplast (371 aa).

The N-terminal 18 residues, 1-18 (MKIRFVFILSVLISGVCC), are a transit peptide targeting the apicoplast. Residues Lys-68, 155–159 (ARLYS), 172–179 (AIKIHKYE), 192–194 (YCS), and Thr-235 each bind FAD. In terms of domain architecture, FAD-binding FR-type spans 68 to 218 (KNPLKCKIVD…TGAHGYFNLP (151 aa)). Residue Lys-174 coordinates NADP(+). Residues 272-273 (VY), Ser-302, 313-315 (YVQ), and 341-343 (HKS) each bind NADP(+). Residues Lys-342 and Tyr-371 each contribute to the FAD site.

The protein belongs to the ferredoxin--NADP reductase type 1 family. As to quaternary structure, monomer. Homodimer; disulfide linked. NADP binding accelerates formation of an inactive, disulfide-linked homodimer when the protein is exposed to air for 24 hours or more (in vitro); the physiological relevance of this is uncertain. It depends on FAD as a cofactor.

The protein localises to the plastid. It localises to the apicoplast. It carries out the reaction 2 reduced [2Fe-2S]-[ferredoxin] + NADP(+) + H(+) = 2 oxidized [2Fe-2S]-[ferredoxin] + NADPH. May play a role in the terminal step of the DOXP/MEP pathway for isoprenoid precursor biosynthesis. The chain is Ferredoxin--NADP reductase, apicoplast from Plasmodium falciparum (isolate 3D7).